The following is a 203-amino-acid chain: Corrinoid adenosyltransferase (203 aa).

The segment at 1 to 21 (MNESPEKDQRHRERMERKKAV) is disordered. 41 to 47 (GNGKGKS) lines the ATP pocket.

The protein belongs to the Cob(I)alamin adenosyltransferase family. As to quaternary structure, monomer. It depends on Mn(2+) as a cofactor.

The protein resides in the cytoplasm. It carries out the reaction 2 cob(II)yrinate a,c diamide + reduced [electron-transfer flavoprotein] + 2 ATP = 2 adenosylcob(III)yrinate a,c-diamide + 2 triphosphate + oxidized [electron-transfer flavoprotein] + 3 H(+). The enzyme catalyses 2 cob(II)alamin + reduced [electron-transfer flavoprotein] + 2 ATP = 2 adenosylcob(III)alamin + 2 triphosphate + oxidized [electron-transfer flavoprotein] + 3 H(+). The protein operates within cofactor biosynthesis; adenosylcobalamin biosynthesis; adenosylcobalamin from cob(II)yrinate a,c-diamide: step 2/7. Its function is as follows. Required for both de novo synthesis of the corrin ring for the assimilation of exogenous corrinoids. Participates in the adenosylation of a variety of incomplete and complete corrinoids. This chain is Corrinoid adenosyltransferase (cobO), found in Pseudomonas aeruginosa (strain ATCC 15692 / DSM 22644 / CIP 104116 / JCM 14847 / LMG 12228 / 1C / PRS 101 / PAO1).